Here is an 88-residue protein sequence, read N- to C-terminus: MLEPSPYQDHKTWKMTPAMIRARQPFFKKNLMGLVILLGVTGTIYTYTYKMLNKDSDFADVPIPPIDEKELEQLKKEYELEKIRRAQK.

Residues 1–30 (MLEPSPYQDHKTWKMTPAMIRARQPFFKKN) are Mitochondrial matrix-facing. Residues 31 to 49 (LMGLVILLGVTGTIYTYTY) traverse the membrane as a helical segment. Residues 50–88 (KMLNKDSDFADVPIPPIDEKELEQLKKEYELEKIRRAQK) are Mitochondrial intermembrane-facing.

Belongs to the COA3 family. As to quaternary structure, component of 250-400 kDa complexes called cytochrome oxidase assembly intermediates or COA complexes.

Its subcellular location is the mitochondrion inner membrane. Functionally, required for assembly of cytochrome c oxidase (complex IV). This chain is Cytochrome c oxidase assembly factor 3, mitochondrial (COA3), found in Kluyveromyces lactis (strain ATCC 8585 / CBS 2359 / DSM 70799 / NBRC 1267 / NRRL Y-1140 / WM37) (Yeast).